The sequence spans 369 residues: MRVIVTGGGTGGHIYPALAIAKGILVHQPDAEILYIGTREGMEARLVPEAGLEFAGVSGQGLPRKLSLETLKVGGKSFKALWETKQILKKFKPDLVVGTGGYVAGPVVLTAALFGIPTLLHEQNALPGITNKILTRFVRKVMVTFPESIAHFGVRRKLVLTGLPVRPEIGNISRERGAACLGLRSDCLTLLVTGGSRGARSINQAMPTVLKHLAGRKDIQVIWATGKATYQETLESLKTQGIQWQRENWRVLEYLKDMPEAMACADLFVGRAGATTLAEIMVAGKPGILIPYPLAAENHQEFNARALEKDGAACVILDKDLTGENLWALVQGLIEKPEKLRKMAQAARSLGQPDALNKIVKVCLDTAWK.

Residues 10-12 (TGG), Asn-124, Arg-166, Ser-196, and Gln-300 contribute to the UDP-N-acetyl-alpha-D-glucosamine site.

This sequence belongs to the glycosyltransferase 28 family. MurG subfamily.

It is found in the cell membrane. The enzyme catalyses di-trans,octa-cis-undecaprenyl diphospho-N-acetyl-alpha-D-muramoyl-L-alanyl-D-glutamyl-meso-2,6-diaminopimeloyl-D-alanyl-D-alanine + UDP-N-acetyl-alpha-D-glucosamine = di-trans,octa-cis-undecaprenyl diphospho-[N-acetyl-alpha-D-glucosaminyl-(1-&gt;4)]-N-acetyl-alpha-D-muramoyl-L-alanyl-D-glutamyl-meso-2,6-diaminopimeloyl-D-alanyl-D-alanine + UDP + H(+). It functions in the pathway cell wall biogenesis; peptidoglycan biosynthesis. In terms of biological role, cell wall formation. Catalyzes the transfer of a GlcNAc subunit on undecaprenyl-pyrophosphoryl-MurNAc-pentapeptide (lipid intermediate I) to form undecaprenyl-pyrophosphoryl-MurNAc-(pentapeptide)GlcNAc (lipid intermediate II). The protein is UDP-N-acetylglucosamine--N-acetylmuramyl-(pentapeptide) pyrophosphoryl-undecaprenol N-acetylglucosamine transferase of Desulfitobacterium hafniense (strain DSM 10664 / DCB-2).